The chain runs to 303 residues: US1 protein (303 aa).

The interval 230-284 is disordered; that stretch reads IPAPGRPLPRRRPSEGGMRAPRRRSRAPAPARSTAAAATPPRPGDPRAPAARRAG. Residues 256-268 show a composition bias toward low complexity; that stretch reads APAPARSTAAAAT.

This sequence belongs to the herpesviridae US2 family.

This Equine herpesvirus 1 (strain Kentucky A) (EHV-1) protein is US1 protein (US1).